A 325-amino-acid chain; its full sequence is G-protein coupled receptor E6 (325 aa).

Transmembrane regions (helical) follow at residues 45 to 65 (LFGT…MGFF), 71 to 91 (FTPS…LWLM), 106 to 126 (IVTE…NVGM), 145 to 165 (PAAI…VIAV), 198 to 218 (LVAK…GTAL), 233 to 253 (AICV…LTAM), and 274 to 294 (VFIY…MFTG).

Belongs to the G-protein coupled receptor 1 family.

It localises to the host membrane. The polypeptide is G-protein coupled receptor E6 (E6) (Equus caballus (Horse)).